Reading from the N-terminus, the 292-residue chain is Tubulin beta chain (292 aa).

The GTP site is built by Asn49 and Asn71. A disordered region spans residues 265 to 292; that stretch reads SEYQQYQDATAEEEGEFDEEEEGDEEAA. Residues 274 to 292 show a composition bias toward acidic residues; it reads TAEEEGEFDEEEEGDEEAA.

Belongs to the tubulin family. In terms of assembly, dimer of alpha and beta chains. A typical microtubule is a hollow water-filled tube with an outer diameter of 25 nm and an inner diameter of 15 nM. Alpha-beta heterodimers associate head-to-tail to form protofilaments running lengthwise along the microtubule wall with the beta-tubulin subunit facing the microtubule plus end conferring a structural polarity. Microtubules usually have 13 protofilaments but different protofilament numbers can be found in some organisms and specialized cells. Mg(2+) is required as a cofactor.

It localises to the cytoplasm. Its subcellular location is the cytoskeleton. In terms of biological role, tubulin is the major constituent of microtubules, a cylinder consisting of laterally associated linear protofilaments composed of alpha- and beta-tubulin heterodimers. Microtubules grow by the addition of GTP-tubulin dimers to the microtubule end, where a stabilizing cap forms. Below the cap, tubulin dimers are in GDP-bound state, owing to GTPase activity of alpha-tubulin. This is Tubulin beta chain from Strongylocentrotus purpuratus (Purple sea urchin).